Consider the following 166-residue polypeptide: MAIKLEDKKAIVAEVNEAAKVALSAVVADARGVTVSAMTGLRKEAREAGVYVRVVRNTLLKRAVEGTEFSILNDAFKGPTLIAFSNEHPGAAARLFKEFAKGQDKFEIKAAAFDGNFIAANQIDVLATLPTRDEAIARLMSVIQGATSKLARTLAAIRDQKEATAA.

Belongs to the universal ribosomal protein uL10 family. In terms of assembly, part of the ribosomal stalk of the 50S ribosomal subunit. The N-terminus interacts with L11 and the large rRNA to form the base of the stalk. The C-terminus forms an elongated spine to which L12 dimers bind in a sequential fashion forming a multimeric L10(L12)X complex.

In terms of biological role, forms part of the ribosomal stalk, playing a central role in the interaction of the ribosome with GTP-bound translation factors. The sequence is that of Large ribosomal subunit protein uL10 from Pseudomonas putida (strain GB-1).